Reading from the N-terminus, the 334-residue chain is Ornithine carbamoyltransferase subunit F (334 aa).

Carbamoyl phosphate-binding positions include serine 56 to threonine 59, glutamine 83, arginine 107, and histidine 134 to glutamine 137. L-ornithine is bound by residues asparagine 168, aspartate 232, and serine 236 to methionine 237. Carbamoyl phosphate contacts are provided by residues cysteine 274–leucine 275 and arginine 320.

It belongs to the aspartate/ornithine carbamoyltransferase superfamily. OTCase family. In terms of assembly, in E.coli strain K12, trimer of identical or non-identical chains are composed of ArgI (I) and/or ArgF (F). The trimer has the following composition: FFI, FFF, FII, III. E.coli strains B and W, which are known to contain only ArgI, produce only a trimer of identical chains (III).

The protein resides in the cytoplasm. It carries out the reaction carbamoyl phosphate + L-ornithine = L-citrulline + phosphate + H(+). It functions in the pathway amino-acid biosynthesis; L-arginine biosynthesis; L-arginine from L-ornithine and carbamoyl phosphate: step 1/3. Its function is as follows. Reversibly catalyzes the transfer of the carbamoyl group from carbamoyl phosphate (CP) to the N(epsilon) atom of ornithine (ORN) to produce L-citrulline, which is a substrate for argininosuccinate synthetase, the enzyme involved in the final step in arginine biosynthesis. The protein is Ornithine carbamoyltransferase subunit F of Escherichia coli (strain K12).